A 474-amino-acid chain; its full sequence is Transmembrane transporter FVEG_12640 (474 aa).

Residues 1–15 (MASPTISSMEQYTPS) show a composition bias toward polar residues. The interval 1-39 (MASPTISSMEQYTPSSKDEKIVPLHGDAAGSDTEKGESR) is disordered. 10 consecutive transmembrane segments (helical) span residues 72–92 (ILAI…LCIV), 133–153 (LVGV…IVTS), 164–184 (GTCT…FSSI), 192–212 (WLTW…VVAV), 231–251 (WAPI…NIFI), 275–295 (ACLV…LVIY), 317–337 (VAYG…QHVA), 364–384 (LGIN…VPIL), 387–407 (LLGL…PALL), and 431–451 (LIMI…AVLI).

It belongs to the amino acid/polyamine transporter 2 family.

It is found in the membrane. Transmembrane transporter; part of the Fusarium detoxification of benzoxazolinone cluster 2 (FDB2) involved in the degradation of benzoxazolinones produced by the host plant. Maize, wheat, and rye produce the 2 benzoxazinone phytoanticipins 2,4-dihy-droxy-7-methoxy-1,4-benzoxazin-3-one (DIMBOA) and 2,4-dihydroxy-1,4-benzoxazin-3-one (DIBOA) that, due to their inherent instability once released, spontaneously degrade to the more stable corresponding benzoxazolinones, 6-methoxy-2-benzoxazolinone (MBOA) and 2-benzoxazolinone (BOA), respectively. Might be involved in the transport of metabolites of benzoxazolinone degradation. In Gibberella moniliformis (strain M3125 / FGSC 7600) (Maize ear and stalk rot fungus), this protein is Transmembrane transporter FVEG_12640.